Here is a 309-residue protein sequence, read N- to C-terminus: uncharacterized protein (309 aa).

The segment covering 1 to 16 (MAGNSRRRGAVRKAGT) has biased composition (basic residues). The disordered stretch occupies residues 1–70 (MAGNSRRRGA…AKRTEETETV (70 aa)). S-adenosyl-L-methionine is bound by residues glycine 261, isoleucine 281, and leucine 290.

This sequence belongs to the class IV-like SAM-binding methyltransferase superfamily. RNA methyltransferase TrmH family.

This is an uncharacterized protein from Mycobacterium avium (strain 104).